The chain runs to 101 residues: Urinary protein 2 (101 aa).

The first 21 residues, M1–A21, serve as a signal peptide directing secretion. One can recognise a UPAR/Ly6 domain in the interval L22–V99. 5 disulfide bridges follow: C24/C51, C27/C36, C43/C70, C73/C89, and C90/C96. Residues N67 and N74 are each glycosylated (N-linked (GlcNAc...) asparagine).

N-glycosylated.

Its subcellular location is the secreted. The sequence is that of Urinary protein 2 from Rattus norvegicus (Rat).